We begin with the raw amino-acid sequence, 226 residues long: Uracil-DNA glycosylase (226 aa).

Asp65 serves as the catalytic Proton acceptor.

The protein belongs to the uracil-DNA glycosylase (UDG) superfamily. UNG family.

It localises to the cytoplasm. The catalysed reaction is Hydrolyzes single-stranded DNA or mismatched double-stranded DNA and polynucleotides, releasing free uracil.. Functionally, excises uracil residues from the DNA which can arise as a result of misincorporation of dUMP residues by DNA polymerase or due to deamination of cytosine. In Enterococcus faecalis (strain ATCC 700802 / V583), this protein is Uracil-DNA glycosylase.